The chain runs to 173 residues: RxLR effector protein PITG_10232 (173 aa).

The signal sequence occupies residues 1 to 24 (MRLGYLIVGCAVALLATTDGVVDA). Residues 25 to 64 (SSKHKQLSTDVPRPADDISSERFLRSQDTPEDDGNPAHED) are disordered. Residues 37-49 (RPADDISSERFLR) show a composition bias toward basic and acidic residues. A RxLR-dEER motif is present at residues 46-65 (RFLRSQDTPEDDGNPAHEDR).

The protein belongs to the RxLR effector family.

The protein localises to the secreted. It is found in the host nucleus. The protein resides in the host cytoplasm. Its function is as follows. Effector that leads to host programmed cell death. The sequence is that of RxLR effector protein PITG_10232 from Phytophthora infestans (strain T30-4) (Potato late blight agent).